The chain runs to 181 residues: Biofilm-surface layer protein A (181 aa).

Residues 1-28 (MKRKLLSSLAISALSLGLLVSAPTASFA) form the signal peptide.

The protein belongs to the BslA/BslB family. Forms polymers.

Its subcellular location is the secreted. It localises to the cell wall. Its function is as follows. Involved in biofilm formation. Self-polymerizes and forms a layer on the surface of biofilms that confers hydrophobicity to the biofilm. The layer is stable and capable of resistance to high mechanical force compression. Required for complex colony architecture. May function synergistically with exopolysaccharides and TasA amyloid fibers to facilitate the assembly of the biofilm matrix. The chain is Biofilm-surface layer protein A from Bacillus subtilis (strain 168).